Here is a 598-residue protein sequence, read N- to C-terminus: MVQFEANEKQFKLRREDCCLTIDRESGAVSFEPDELKPVARSKENSVTLFGSIKLKKDKYLILATEKSSAAQILGHKIYRVHKFEVIPYRNLLADDQDELDLYNLLQNHLKTGPFYFSYTWDLTNSLQRSCTDEGKASPILRSDKRFFWNEFASKDFIDLIGAHSEVSLFITPMIYGFITSASTIVKGRTITLALISRRSKQRAGTRYFTRGLDENGNPANFNETEQITIVSDEKSEVTYSHVQTRGSVPAFWAEVNNLRYKPLMVANSASMAAAAAKKHFDEQISIYGDQVVVNLVNCKGHELPIKQLYENVIRRLDNPHIHYHYFDFHKECSHMRWDRVSLLLNEIQPELEEQGYTTLDTQKYRVLSRQNGVVRSNCMDCLDRTNVVQSCIGRWVLTNQLRKCGIIGATHPLRSVIPLDNIFCNIWSDNADYISLSYSGTGALKTDFTRTGIRTRKGAFNDFVNSAKRYILNNFYDGARQDAYDLVLGQFRPDVNFRYRLDLRPLTIRCVPYILLACLILFFMTLFSRSSSTILPPSILLILTFLGIVASLYYCFAHGLQFINWPRLLLPSFLRSDMTPEGRVFVINRQLASKHKV.

Residue S46 is modified to Phosphoserine. The SAC domain maps to 106 to 441; that stretch reads LQNHLKTGPF…ADYISLSYSG (336 aa). A run of 2 helical transmembrane segments spans residues 508 to 528 and 535 to 555; these read TIRCVPYILLACLILFFMTLF and ILPPSILLILTFLGIVASLYY.

It is found in the endoplasmic reticulum membrane. This is an uncharacterized protein from Schizosaccharomyces pombe (strain 972 / ATCC 24843) (Fission yeast).